The sequence spans 105 residues: Large ribosomal subunit protein uL24 (105 aa).

Over residues 77–93 the composition is skewed to basic and acidic residues; that stretch reads DGKPTRVGYRKDDETGK. A disordered region spans residues 77-105; it reads DGKPTRVGYRKDDETGKNVRIAKSNGKDL.

Belongs to the universal ribosomal protein uL24 family. Part of the 50S ribosomal subunit.

In terms of biological role, one of two assembly initiator proteins, it binds directly to the 5'-end of the 23S rRNA, where it nucleates assembly of the 50S subunit. Functionally, one of the proteins that surrounds the polypeptide exit tunnel on the outside of the subunit. This Mycolicibacterium gilvum (strain PYR-GCK) (Mycobacterium gilvum (strain PYR-GCK)) protein is Large ribosomal subunit protein uL24.